The chain runs to 213 residues: Uracil phosphoribosyltransferase (213 aa).

5-phospho-alpha-D-ribose 1-diphosphate is bound by residues arginine 78, arginine 103, and 131–139; that span reads DPMLATGGT. Uracil is bound by residues isoleucine 197 and 202–204; that span reads GDA. Aspartate 203 is a binding site for 5-phospho-alpha-D-ribose 1-diphosphate.

Belongs to the UPRTase family. Mg(2+) is required as a cofactor.

The catalysed reaction is UMP + diphosphate = 5-phospho-alpha-D-ribose 1-diphosphate + uracil. The protein operates within pyrimidine metabolism; UMP biosynthesis via salvage pathway; UMP from uracil: step 1/1. With respect to regulation, allosterically activated by GTP. In terms of biological role, catalyzes the conversion of uracil and 5-phospho-alpha-D-ribose 1-diphosphate (PRPP) to UMP and diphosphate. This chain is Uracil phosphoribosyltransferase, found in Bifidobacterium animalis subsp. lactis (strain AD011).